The chain runs to 118 residues: Large ribosomal subunit protein uL18 (118 aa).

This sequence belongs to the universal ribosomal protein uL18 family. Part of the 50S ribosomal subunit; part of the 5S rRNA/L5/L18/L25 subcomplex. Contacts the 5S and 23S rRNAs.

Functionally, this is one of the proteins that bind and probably mediate the attachment of the 5S RNA into the large ribosomal subunit, where it forms part of the central protuberance. This Rhizorhabdus wittichii (strain DSM 6014 / CCUG 31198 / JCM 15750 / NBRC 105917 / EY 4224 / RW1) (Sphingomonas wittichii) protein is Large ribosomal subunit protein uL18.